Here is a 79-residue protein sequence, read N- to C-terminus: uncharacterized protein (79 aa).

This is an uncharacterized protein from Haemophilus influenzae (strain ATCC 51907 / DSM 11121 / KW20 / Rd).